The following is a 229-amino-acid chain: Allatostatin-A (229 aa).

Positions 1 to 18 (MLSTSLPVCFLVIGAALC) are cleaved as a signal peptide. Positions 19–48 (APERMQNDPDPHDSTAQGSDNHSDHIAPLA) are excised as a propeptide. The disordered stretch occupies residues 23-46 (MQNDPDPHDSTAQGSDNHSDHIAP). Leucine 58 carries the post-translational modification Leucine amide. Residues 62–80 (AYSYVSEYKRLPVYNFGLG) constitute a propeptide that is removed on maturation. Leucine amide is present on leucine 90. Residues 94–130 (SVDEDQTNDDQQQIMNNDLDQAALAEFFDQYDDAGYE) constitute a propeptide that is removed on maturation. Leucine 140 is subject to Leucine amide. Residues 144 to 152 (FADDDTSEE) constitute a propeptide that is removed on maturation. Leucine amide is present on residues leucine 162, leucine 173, leucine 184, leucine 196, and leucine 210. Residues 214-229 (SADDASTEDSDNYFDV) constitute a propeptide that is removed on maturation.

Belongs to the allatostatin family. In terms of tissue distribution, allatostatin-A-1: Expressed in antennal lobe (AL), corpora cardiaca (CC), corpora allata (CA) and gnathal ganglion (GNG) (at protein level). Expression in AL and GNG detected in most animals, in CC and CA in some animals (at protein level). Allatostatin-A-3: Expressed in antennal lobe (AL), corpora cardiaca (CC), corpora allata (CA) and gnathal ganglion (GNG) (at protein level). Expression in AL detected in all animals, in GNG, CC and CA in most animals (at protein level). Allatostatin-A-4: Expressed in antennal lobe (AL), corpora cardiaca (CC), corpora allata (CA) and gnathal ganglion (GNG) in all animals (at protein level). Allatostatin-A-5: Expressed in antennal lobe (AL), corpora cardiaca (CC), corpora allata (CA) and gnathal ganglion (GNG) in all animals (at protein level). Allatostatin-A-6: Expressed in antennal lobe (AL) and gnathal ganglion (GNG) (at protein level). Expression in AL detected in some animals, in GNG in few animals (at protein level). Not expressed in corpora cardiaca (CC) and corpora allata (CA) (at protein level). Allatostatin-A-7: Expressed in antennal lobe (AL), corpora cardiaca (CC), corpora allata (CA) and gnathal ganglion (GNG) (at protein level). Expression in AL detected in all animals, in GNG, CC and CA in most animals (at protein level). Allatostatin-A-8: Expressed in antennal lobe (AL), corpora cardiaca (CC), corpora allata (CA) and gnathal ganglion (GNG) (at protein level). Expression in AL detected in all animals, in GNG, CC and CA in most animals (at protein level). Allatostatin-A-9: Expressed in antennal lobe (AL), corpora cardiaca (CC), corpora allata (CA) and gnathal ganglion (GNG) (at protein level). Expression in AL detected in all animals, in GNG in most animals and in CC and CA in some animals (at protein level).

It localises to the secreted. Functionally, neuropeptide inhibitors of juvenile hormone synthesis and gut muscle contraction. The protein is Allatostatin-A of Agrotis ipsilon (Black cutworm moth).